Here is a 658-residue protein sequence, read N- to C-terminus: DNA mismatch repair protein MutL (658 aa).

Positions 114–130 (RQEDSSHATQVKAEDGK) are enriched in basic and acidic residues. Disordered regions lie at residues 114–138 (RQED…TAAA) and 353–405 (PMPS…HSLS). The segment covering 361–372 (ENLFDSASNHPT) has biased composition (polar residues).

This sequence belongs to the DNA mismatch repair MutL/HexB family.

In terms of biological role, this protein is involved in the repair of mismatches in DNA. It is required for dam-dependent methyl-directed DNA mismatch repair. May act as a 'molecular matchmaker', a protein that promotes the formation of a stable complex between two or more DNA-binding proteins in an ATP-dependent manner without itself being part of a final effector complex. The protein is DNA mismatch repair protein MutL of Neisseria gonorrhoeae (strain NCCP11945).